The chain runs to 526 residues: Bifunctional purine biosynthesis protein PurH (526 aa).

The 148-residue stretch at 1–148 (MQRPIIIRRA…KNYSNVVVVV (148 aa)) folds into the MGS-like domain.

This sequence belongs to the PurH family.

The enzyme catalyses (6R)-10-formyltetrahydrofolate + 5-amino-1-(5-phospho-beta-D-ribosyl)imidazole-4-carboxamide = 5-formamido-1-(5-phospho-D-ribosyl)imidazole-4-carboxamide + (6S)-5,6,7,8-tetrahydrofolate. It carries out the reaction IMP + H2O = 5-formamido-1-(5-phospho-D-ribosyl)imidazole-4-carboxamide. It functions in the pathway purine metabolism; IMP biosynthesis via de novo pathway; 5-formamido-1-(5-phospho-D-ribosyl)imidazole-4-carboxamide from 5-amino-1-(5-phospho-D-ribosyl)imidazole-4-carboxamide (10-formyl THF route): step 1/1. It participates in purine metabolism; IMP biosynthesis via de novo pathway; IMP from 5-formamido-1-(5-phospho-D-ribosyl)imidazole-4-carboxamide: step 1/1. The protein is Bifunctional purine biosynthesis protein PurH of Baumannia cicadellinicola subsp. Homalodisca coagulata.